Consider the following 180-residue polypeptide: MGLIATPQPVVGTPPAQDNYFLSINDQLADKGFLVTSTDELINWARTGSLMWMTFGLACCAVEMMQMSMPRYDCERFGFAPRGSPRQSDVMIVAGTLTNKMAPALRKVYDQMPEPRYVISMGSCANGGGYYHYSYSVVRGCDRIVPVDIYVPGCPPSAEALLYGVLLLQKKIRRTGTIER.

[4Fe-4S] cluster contacts are provided by Cys59, Cys60, Cys124, and Cys154.

Belongs to the complex I 20 kDa subunit family. As to quaternary structure, NDH-1 is composed of 14 different subunits. Subunits NuoB, C, D, E, F, and G constitute the peripheral sector of the complex. Requires [4Fe-4S] cluster as cofactor.

The protein resides in the cell inner membrane. It catalyses the reaction a quinone + NADH + 5 H(+)(in) = a quinol + NAD(+) + 4 H(+)(out). Its function is as follows. NDH-1 shuttles electrons from NADH, via FMN and iron-sulfur (Fe-S) centers, to quinones in the respiratory chain. The immediate electron acceptor for the enzyme in this species is believed to be ubiquinone. Couples the redox reaction to proton translocation (for every two electrons transferred, four hydrogen ions are translocated across the cytoplasmic membrane), and thus conserves the redox energy in a proton gradient. In Beijerinckia indica subsp. indica (strain ATCC 9039 / DSM 1715 / NCIMB 8712), this protein is NADH-quinone oxidoreductase subunit B.